A 285-amino-acid chain; its full sequence is UPF0354 protein MW1686 (285 aa).

It belongs to the UPF0354 family.

This is UPF0354 protein MW1686 from Staphylococcus aureus (strain MW2).